A 1081-amino-acid polypeptide reads, in one-letter code: Zinc finger protein 827 (1081 aa).

A compositionally biased stretch (basic and acidic residues) spans 1–10 (MPRRKQEQPK). Positions 1–14 (MPRRKQEQPKRLPS) are mediates direct interaction with RBBP4. Residues 1–77 (MPRRKQEQPK…DTSLGSTTPS (77 aa)) are disordered. Residues 3-5 (RRK) carry the RRK motif; mediates NuRD recruitment to telomeres motif. Polar residues predominate over residues 62–77 (EQSTSPDTSLGSTTPS). Residues lysine 176, lysine 216, and lysine 226 each participate in a glycyl lysine isopeptide (Lys-Gly) (interchain with G-Cter in SUMO2) cross-link. 2 disordered regions span residues 259–278 (KVSE…ASSF) and 307–348 (SSLL…SLEL). Over residues 327 to 344 (VTPPPPPPPPPPPPPPPQ) the composition is skewed to pro residues. Residues lysine 360 and lysine 372 each participate in a glycyl lysine isopeptide (Lys-Gly) (interchain with G-Cter in SUMO2) cross-link. 3 consecutive C2H2-type zinc fingers follow at residues 374 to 396 (FQCP…MVIH), 402 to 424 (HQCP…MKVH), and 433 to 455 (FQCQ…MRCH). Glycyl lysine isopeptide (Lys-Gly) (interchain with G-Cter in SUMO2) cross-links involve residues lysine 466, lysine 475, lysine 523, lysine 549, lysine 580, lysine 587, lysine 597, lysine 634, lysine 639, and lysine 658. Lysine 673 participates in a covalent cross-link: Glycyl lysine isopeptide (Lys-Gly) (interchain with G-Cter in SUMO1); alternate. Lysine 673 is covalently cross-linked (Glycyl lysine isopeptide (Lys-Gly) (interchain with G-Cter in SUMO2); alternate). Residues lysine 704, lysine 710, lysine 742, lysine 778, and lysine 798 each participate in a glycyl lysine isopeptide (Lys-Gly) (interchain with G-Cter in SUMO2) cross-link. C2H2-type zinc fingers lie at residues 817–839 (FPCD…LSLH) and 845–867 (YKCH…LTVH). Glycyl lysine isopeptide (Lys-Gly) (interchain with G-Cter in SUMO2) cross-links involve residues lysine 870 and lysine 891. 2 C2H2-type zinc fingers span residues 897-919 (YSCH…MSLH) and 929-952 (ICCT…GTKH). Positions 947–960 (HIGTKHTGEDRKTP) are enriched in basic and acidic residues. A disordered region spans residues 947–996 (HIGTKHTGEDRKTPSESNSPSSSSLSALSDSANSKDDSDGSQKNKGGNNL). Residue lysine 958 forms a Glycyl lysine isopeptide (Lys-Gly) (interchain with G-Cter in SUMO2) linkage. Positions 961–978 (SESNSPSSSSLSALSDSA) are enriched in low complexity. The segment covering 979 to 988 (NSKDDSDGSQ) has biased composition (basic and acidic residues). Lysine 1014 is covalently cross-linked (Glycyl lysine isopeptide (Lys-Gly) (interchain with G-Cter in SUMO2)). C2H2-type zinc fingers lie at residues 1019–1041 (FECV…LQIH) and 1047–1069 (FECD…KKCH).

It belongs to the krueppel C2H2-type zinc-finger protein family. Part of a transcription inhibitory ribonucleoprotein complex composed at least of the circular RNA circZNF827, HNRNPK and HNRNPL. Interacts with the nucleosome remodeling and histone deacetylase/NuRD complex. Interacts with RBBP4; the interaction is direct and recruits RBBP4, a component of the NuRD complex, to telomeres.

Its subcellular location is the nucleus. It is found in the chromosome. The protein resides in the telomere. As part of a ribonucleoprotein complex composed at least of HNRNPK, HNRNPL and the circular RNA circZNF827 that nucleates the complex on chromatin, may negatively regulate the transcription of genes involved in neuronal differentiation. Could also recruit the nucleosome remodeling and histone deacetylase/NuRD complex to telomeric regions of chromosomes to regulate chromatin remodeling as part of telomere maintenance. This chain is Zinc finger protein 827 (ZNF827), found in Homo sapiens (Human).